Here is a 380-residue protein sequence, read N- to C-terminus: Queuine tRNA-ribosyltransferase (380 aa).

Catalysis depends on aspartate 96, which acts as the Proton acceptor. Residues 96 to 100 (DSGGF), aspartate 150, glutamine 193, and glycine 220 contribute to the substrate site. The interval 251 to 257 (GVGAPDS) is RNA binding. Catalysis depends on aspartate 270, which acts as the Nucleophile. The segment at 275 to 279 (TRIAR) is RNA binding; important for wobble base 34 recognition. Zn(2+)-binding residues include cysteine 308, cysteine 310, cysteine 313, and histidine 339.

The protein belongs to the queuine tRNA-ribosyltransferase family. As to quaternary structure, homodimer. Within each dimer, one monomer is responsible for RNA recognition and catalysis, while the other monomer binds to the replacement base PreQ1. It depends on Zn(2+) as a cofactor.

The catalysed reaction is 7-aminomethyl-7-carbaguanine + guanosine(34) in tRNA = 7-aminomethyl-7-carbaguanosine(34) in tRNA + guanine. Its pathway is tRNA modification; tRNA-queuosine biosynthesis. Catalyzes the base-exchange of a guanine (G) residue with the queuine precursor 7-aminomethyl-7-deazaguanine (PreQ1) at position 34 (anticodon wobble position) in tRNAs with GU(N) anticodons (tRNA-Asp, -Asn, -His and -Tyr). Catalysis occurs through a double-displacement mechanism. The nucleophile active site attacks the C1' of nucleotide 34 to detach the guanine base from the RNA, forming a covalent enzyme-RNA intermediate. The proton acceptor active site deprotonates the incoming PreQ1, allowing a nucleophilic attack on the C1' of the ribose to form the product. After dissociation, two additional enzymatic reactions on the tRNA convert PreQ1 to queuine (Q), resulting in the hypermodified nucleoside queuosine (7-(((4,5-cis-dihydroxy-2-cyclopenten-1-yl)amino)methyl)-7-deazaguanosine). This is Queuine tRNA-ribosyltransferase from Streptococcus uberis (strain ATCC BAA-854 / 0140J).